Reading from the N-terminus, the 362-residue chain is Anthranilate phosphoribosyltransferase (362 aa).

Residues glycine 96, 99-100, threonine 104, 106-109, 124-132, and glycine 136 each bind 5-phospho-alpha-D-ribose 1-diphosphate; these read GD, NIST, and KHGNRAASS. Residue glycine 96 coordinates anthranilate. Residue serine 108 participates in Mg(2+) binding. Asparagine 127 is an anthranilate binding site. Arginine 182 is a binding site for anthranilate. Residues aspartate 240 and glutamate 241 each coordinate Mg(2+).

Belongs to the anthranilate phosphoribosyltransferase family. As to quaternary structure, homodimer. Requires Mg(2+) as cofactor.

It carries out the reaction N-(5-phospho-beta-D-ribosyl)anthranilate + diphosphate = 5-phospho-alpha-D-ribose 1-diphosphate + anthranilate. The protein operates within amino-acid biosynthesis; L-tryptophan biosynthesis; L-tryptophan from chorismate: step 2/5. In terms of biological role, catalyzes the transfer of the phosphoribosyl group of 5-phosphorylribose-1-pyrophosphate (PRPP) to anthranilate to yield N-(5'-phosphoribosyl)-anthranilate (PRA). The polypeptide is Anthranilate phosphoribosyltransferase (Rhodococcus jostii (strain RHA1)).